The chain runs to 547 residues: Chaperonin GroEL 2 (547 aa).

ATP-binding positions include 30-33 (TLGP), lysine 51, 87-91 (DGTTT), glycine 415, and aspartate 496.

This sequence belongs to the chaperonin (HSP60) family. Forms a cylinder of 14 subunits composed of two heptameric rings stacked back-to-back. Interacts with the co-chaperonin GroES.

Its subcellular location is the cytoplasm. The enzyme catalyses ATP + H2O + a folded polypeptide = ADP + phosphate + an unfolded polypeptide.. Together with its co-chaperonin GroES, plays an essential role in assisting protein folding. The GroEL-GroES system forms a nano-cage that allows encapsulation of the non-native substrate proteins and provides a physical environment optimized to promote and accelerate protein folding. This Rhodopseudomonas palustris (strain ATCC BAA-98 / CGA009) protein is Chaperonin GroEL 2.